A 457-amino-acid chain; its full sequence is tRNA-2-methylthio-N(6)-dimethylallyladenosine synthase (457 aa).

In terms of domain architecture, MTTase N-terminal spans 3–120 (KKVYVKTFGC…LPQMIDKRRE (118 aa)). Cys-12, Cys-49, Cys-83, Cys-157, Cys-161, and Cys-164 together coordinate [4Fe-4S] cluster. Positions 143-377 (RVDGPSAFVS…QATIEENVQR (235 aa)) constitute a Radical SAM core domain. One can recognise a TRAM domain in the interval 380–447 (DSMVGKIERI…PHSLRGELVL (68 aa)).

It belongs to the methylthiotransferase family. MiaB subfamily. In terms of assembly, monomer. The cofactor is [4Fe-4S] cluster.

Its subcellular location is the cytoplasm. The catalysed reaction is N(6)-dimethylallyladenosine(37) in tRNA + (sulfur carrier)-SH + AH2 + 2 S-adenosyl-L-methionine = 2-methylsulfanyl-N(6)-dimethylallyladenosine(37) in tRNA + (sulfur carrier)-H + 5'-deoxyadenosine + L-methionine + A + S-adenosyl-L-homocysteine + 2 H(+). Catalyzes the methylthiolation of N6-(dimethylallyl)adenosine (i(6)A), leading to the formation of 2-methylthio-N6-(dimethylallyl)adenosine (ms(2)i(6)A) at position 37 in tRNAs that read codons beginning with uridine. This chain is tRNA-2-methylthio-N(6)-dimethylallyladenosine synthase, found in Paraburkholderia xenovorans (strain LB400).